The sequence spans 174 residues: Peptide methionine sulfoxide reductase MsrA (174 aa).

The active site involves C11.

Belongs to the MsrA Met sulfoxide reductase family.

The catalysed reaction is L-methionyl-[protein] + [thioredoxin]-disulfide + H2O = L-methionyl-(S)-S-oxide-[protein] + [thioredoxin]-dithiol. The enzyme catalyses [thioredoxin]-disulfide + L-methionine + H2O = L-methionine (S)-S-oxide + [thioredoxin]-dithiol. Its function is as follows. Has an important function as a repair enzyme for proteins that have been inactivated by oxidation. Catalyzes the reversible oxidation-reduction of methionine sulfoxide in proteins to methionine. The polypeptide is Peptide methionine sulfoxide reductase MsrA (Nitratiruptor sp. (strain SB155-2)).